The primary structure comprises 97 residues: Peptide YY-A (97 aa).

The N-terminal stretch at 1 to 28 (MAVMLKPWTVVATVLICVLLCLGTFVDA) is a signal peptide. Tyrosine amide is present on Tyr64. Residues 68-97 (STSEDVMAELLFGDDTEHKQRSRYDDSFMW) constitute a propeptide, C-terminal extension.

It belongs to the NPY family. As to expression, mainly expressed in brainstem neurons, and in the telencephalon. Also expressed in intestinal endocrine cells.

It localises to the secreted. The sequence is that of Peptide YY-A (pyya) from Danio rerio (Zebrafish).